Reading from the N-terminus, the 194-residue chain is Peptidyl-tRNA hydrolase (194 aa).

Residue Y17 coordinates tRNA. The active-site Proton acceptor is the H22. Positions 68, 70, and 116 each coordinate tRNA.

Belongs to the PTH family. As to quaternary structure, monomer.

The protein localises to the cytoplasm. It carries out the reaction an N-acyl-L-alpha-aminoacyl-tRNA + H2O = an N-acyl-L-amino acid + a tRNA + H(+). Hydrolyzes ribosome-free peptidyl-tRNAs (with 1 or more amino acids incorporated), which drop off the ribosome during protein synthesis, or as a result of ribosome stalling. Its function is as follows. Catalyzes the release of premature peptidyl moieties from peptidyl-tRNA molecules trapped in stalled 50S ribosomal subunits, and thus maintains levels of free tRNAs and 50S ribosomes. The sequence is that of Peptidyl-tRNA hydrolase from Pseudomonas paraeruginosa (strain DSM 24068 / PA7) (Pseudomonas aeruginosa (strain PA7)).